Here is a 138-residue protein sequence, read N- to C-terminus: Large ribosomal subunit protein bL19 (138 aa).

The protein belongs to the bacterial ribosomal protein bL19 family.

In terms of biological role, this protein is located at the 30S-50S ribosomal subunit interface and may play a role in the structure and function of the aminoacyl-tRNA binding site. The chain is Large ribosomal subunit protein bL19 from Leptospira interrogans serogroup Icterohaemorrhagiae serovar Lai (strain 56601).